We begin with the raw amino-acid sequence, 213 residues long: Kynurenine formamidase (213 aa).

Trp18 provides a ligand contact to substrate. 3 residues coordinate Zn(2+): His48, His52, and Asp54. His58 functions as the Proton donor/acceptor in the catalytic mechanism. Residues His160 and Glu172 each contribute to the Zn(2+) site.

Belongs to the Cyclase 1 superfamily. KynB family. As to quaternary structure, homodimer. Zn(2+) is required as a cofactor.

It catalyses the reaction N-formyl-L-kynurenine + H2O = L-kynurenine + formate + H(+). The protein operates within amino-acid degradation; L-tryptophan degradation via kynurenine pathway; L-kynurenine from L-tryptophan: step 2/2. In terms of biological role, catalyzes the hydrolysis of N-formyl-L-kynurenine to L-kynurenine, the second step in the kynurenine pathway of tryptophan degradation. In Burkholderia vietnamiensis (strain G4 / LMG 22486) (Burkholderia cepacia (strain R1808)), this protein is Kynurenine formamidase.